We begin with the raw amino-acid sequence, 359 residues long: CCAAT/enhancer-binding protein alpha (359 aa).

Residues 1-55 are disordered; that stretch reads MESADFYEVEPRPPMSSHLQSPPHAPSNAAFGFPRGAGPAPPPAPPAAPEPLGGI. Positions 1–70 are required to repress E2F1:TFDP1-mediated transcription, to inhibit cell cycle and to induce adipocyte differentiation; sequence MESADFYEVE…SIDISAYIDP (70 aa). A compositionally biased stretch (low complexity) spans 29-38; it reads AAFGFPRGAG. The span at 39-49 shows a compositional bias: pro residues; it reads PAPPPAPPAAP. Residues 54–72 form a required for interaction with TRIB1 region; it reads GICEHETSIDISAYIDPAA. Residues 126–200 are required to induce adipocyte differentiation; it reads PPGYGCAAAG…HASPAHLAAP (75 aa). K159 is modified (N6-acetyllysine; alternate). Residue K159 forms a Glycyl lysine isopeptide (Lys-Gly) (interchain with G-Cter in SUMO); alternate linkage. Residue K159 forms a Glycyl lysine isopeptide (Lys-Gly) (interchain with G-Cter in SUMO2); alternate linkage. Disordered regions lie at residues 176-195 and 213-293; these read LFPYQPPPPPPPPHPHASPA and TMHL…RERN. Positions 179–191 are enriched in pro residues; that stretch reads YQPPPPPPPPHPH. A required to functionally cooperate with SREBF1 in promoter activation region spans residues 180–194; sequence QPPPPPPPPHPHASP. S193 carries the post-translational modification Phosphoserine. Residues 220–232 show a composition bias toward pro residues; sequence HPTPPPTPVPSPH. Phosphothreonine; by GSK3 occurs at positions 222 and 226. Position 230 is a phosphoserine; by GSK3 (S230). The span at 233-255 shows a compositional bias: low complexity; the sequence is AAPALGAAGLPGPGSALKGLAGA. The segment at 240-359 is interaction with FOXO1; the sequence is AGLPGPGSAL…SLVKAMGNCA (120 aa). A compositionally biased stretch (gly residues) spans 261–272; the sequence is TGGGGGGSGAGA. Basic and acidic residues predominate over residues 277 to 293; the sequence is KSVDKNSNEYRVRRERN. One can recognise a bZIP domain in the interval 283–346; the sequence is SNEYRVRRER…DTLRGIFRQL (64 aa). The DNA-binding element occupies 286-301; sequence YRVRRERNNIAVRKSR. The tract at residues 287–314 is basic motif; that stretch reads RVRRERNNIAVRKSRDKAKQRNVETQQK. Positions 318 to 346 are leucine-zipper; sequence LTSDNDRLRKRVEQLSRELDTLRGIFRQL.

The protein belongs to the bZIP family. C/EBP subfamily. Binds DNA as a homodimer and as a heterodimer. Can form stable heterodimers with CEBPB, CEBPD, CEBPE and CEBPG. Interacts with PRDM16. Interacts with UBN1. Interacts with ZNF638; this interaction increases transcriptional activation. Interacts with the complex TFDP2:E2F1; the interaction prevents CEBPA binding to target gene promoters and represses its transcriptional activity. Interacts with RB1. Interacts (when phosphorylated at Ser-193) with CDK2, CDK4, E2F4 and SMARCA2. Interacts with SREBPF1. Interacts with FOXO1 (via the Fork-head domain); the interaction increases when FOXO1 is deacetylated. Interacts with SIX1. Interacts (via recognition sequence) with TRIB1. Interacts (via bZIP domain) with OVOL2 (via zinc-finger domains); the interaction inhibits the transcription factor activity of CEBPA and is required to repress adipogenesis. As to quaternary structure, interacts with TAF1A and UBTF. In terms of assembly, interacts with TAF1A and UBTF. Interacts with NPM1. Post-translationally, sumoylated, sumoylation blocks the inhibitory effect on cell proliferation by disrupting the interaction with SMARCA2. In terms of processing, phosphorylation at Ser-193 is required for interaction with CDK2, CDK4 and SWI/SNF complex leading to cell cycle inhibition. Dephosphorylated at Ser-193 by protein phosphatase 2A (PP2A) through PI3K/AKT signaling pathway regulation. Phosphorylation at Thr-222 and Thr-226 by GSK3 is constitutive in adipose tissue and lung. In liver, both Thr-222 and Thr-226 are phosphorylated only during feeding but not during fasting. Phosphorylation of the GSK3 consensus sites selectively decreases transactivation activity on IRE-controlled promoters. Ubiquitinated by COP1 upon interaction with TRIB1. As to expression, isoform 2 and isoform 3 are expressed in adipose tissue and liver (at protein level).

The protein localises to the nucleus. The protein resides in the nucleolus. Transcription factor that coordinates proliferation arrest and the differentiation of myeloid progenitors, adipocytes, hepatocytes, and cells of the lung and the placenta. Binds directly to the consensus DNA sequence 5'-T[TG]NNGNAA[TG]-3' acting as an activator on distinct target genes. During early embryogenesis, plays essential and redundant functions with CEBPB. Essential for the transition from common myeloid progenitors (CMP) to granulocyte/monocyte progenitors (GMP). Critical for the proper development of the liver and the lung. Necessary for terminal adipocyte differentiation, is required for postnatal maintenance of systemic energy homeostasis and lipid storage. To regulate these different processes at the proper moment and tissue, interplays with other transcription factors and modulators. Down-regulates the expression of genes that maintain cells in an undifferentiated and proliferative state through E2F1 repression, which is critical for its ability to induce adipocyte and granulocyte terminal differentiation. Reciprocally E2F1 blocks adipocyte differentiation by binding to specific promoters and repressing CEBPA binding to its target gene promoters. Proliferation arrest also depends on a functional binding to SWI/SNF complex. In liver, regulates gluconeogenesis and lipogenesis through different mechanisms. To regulate gluconeogenesis, functionally cooperates with FOXO1 binding to IRE-controlled promoters and regulating the expression of target genes such as PCK1 or G6PC1. To modulate lipogenesis, interacts and transcriptionally synergizes with SREBF1 in promoter activation of specific lipogenic target genes such as ACAS2. In adipose tissue, seems to act as FOXO1 coactivator accessing to ADIPOQ promoter through FOXO1 binding sites. In terms of biological role, can act as dominant-negative. Binds DNA and have transctivation activity, even if much less efficiently than isoform 2. Does not inhibit cell proliferation. Its function is as follows. Directly and specifically enhances ribosomal DNA transcription interacting with RNA polymerase I-specific cofactors and inducing histone acetylation. This is CCAAT/enhancer-binding protein alpha from Mus musculus (Mouse).